An 883-amino-acid chain; its full sequence is MSTQLSPKYNPAEVEADRYQKWLDADVFKPSGDQKAKPYSIVIPPPNVTGKLHLGHAWDTTLPDIIIRQKRMQGFDTLWLPGMDHAGIATQAKVEARLAEDGISRYDLGREKFLDKVWEWKDEYAATIKEQWGKMGISVDYSRERFTLDEGLSKAVRKVFVELYKKGWIYRGEFIINWDPKARTALSDIEVIHKDVEGAFYHMNYMLEDGSRALEVATTRPETMFGDTAVAVNPNDDRYKDLIGQNVILPIVNKLIPIVADEHADPEFGTGVVKITPAHDPNDFLVGQRHNLPQVNVMNDDGTMNELAGEFAGMDRFEARKATVKKLEEIGALVEIEKMTHSVGHSERTGVPIEPRLSTQWFVKMDQLAKNAIANQDTDDKVDFYPPRFNDTFLQWMENVHDWVISRQLWWGHQIPAWYNADGDMYVGEEAPEGDGWKQDEDVLDTWFSSALWPFSTMGWPDTDSEDFKRYFPTSTLVTGYDIIFFWVSRMIFQSLEFTGCRPFQNVLIHGLIRDEQGRKMSKSLGNGIDPMDVVDKYGADALRWFLSNGSAPGQDVRFSYEKMDAAWNFINKIWNISRYILMNNEGLSLDQASKNVVLVTNGKAGNVTDRWILHNLNETIAKVTENFDKFEFGVAGHILYNFIWDEFADWYVELTKEVLYSEDEAEKVITRSVLLYTLDKILRLLHPIMPFVTEEIFGQYADGSIVTAAYPTVNPAFENQTAHSGVESLKDLIRAVRNARAEVNVAPSKPITILVKTSDSNLEDFFKANVNYIKRFTNPETLEISSAIATPELAMSAVITGAEIFLPLADLLNVEEELARLNKELAKWQKELDIVAKKLSNDRFVQNAKPEIVQKERDKQIDYQTKYDATVERIKEMEKLIK.

The 'HIGH' region signature appears at 46–56 (PNVTGKLHLGH). A 'KMSKS' region motif is present at residues 520–524 (KMSKS). Residue K523 coordinates ATP. Positions 809-883 (LADLLNVEEE…RIKEMEKLIK (75 aa)) form a coiled coil.

It belongs to the class-I aminoacyl-tRNA synthetase family. ValS type 1 subfamily. Monomer.

Its subcellular location is the cytoplasm. It catalyses the reaction tRNA(Val) + L-valine + ATP = L-valyl-tRNA(Val) + AMP + diphosphate. Catalyzes the attachment of valine to tRNA(Val). As ValRS can inadvertently accommodate and process structurally similar amino acids such as threonine, to avoid such errors, it has a 'posttransfer' editing activity that hydrolyzes mischarged Thr-tRNA(Val) in a tRNA-dependent manner. The polypeptide is Valine--tRNA ligase (Streptococcus mutans serotype c (strain ATCC 700610 / UA159)).